Reading from the N-terminus, the 66-residue chain is Beta-toxin Chui2 (66 aa).

Residues 1 to 66 enclose the LCN-type CS-alpha/beta domain; the sequence is KEGYIVNSYT…VWPLKNKTCN (66 aa). Intrachain disulfides connect C12–C65, C16–C41, C25–C46, and C29–C48. N66 bears the Asparagine amide mark.

Belongs to the long (4 C-C) scorpion toxin superfamily. Sodium channel inhibitor family. Beta subfamily. Expressed by the venom gland.

It localises to the secreted. Its function is as follows. Beta toxins bind voltage-independently at site-4 of sodium channels (Nav) and shift the voltage of activation toward more negative potentials thereby affecting sodium channel activation and promoting spontaneous and repetitive firing. This Centruroides huichol (Scorpion) protein is Beta-toxin Chui2.